Consider the following 244-residue polypeptide: Lymphotoxin-beta (244 aa).

At 1–18 the chain is on the cytoplasmic side; it reads MGALGLEGRGGRLQGRGS. The chain crosses the membrane as a helical; Signal-anchor for type II membrane protein span at residues 19 to 48; the sequence is LLLAVAGATSLVTLLLAVPITVLAVLALVP. The Extracellular segment spans residues 49–244; it reads QDQGGLVTET…KTFFGAVMVG (196 aa). The THD domain maps to 88-243; sequence PAAHLIGAPL…GKTFFGAVMV (156 aa). Asparagine 222 carries N-linked (GlcNAc...) asparagine glycosylation.

It belongs to the tumor necrosis factor family. Heterotrimer of either two LTB and one LTA subunits or (less prevalent) two LTA and one LTB subunits.

Its subcellular location is the membrane. Its function is as follows. Cytokine that binds to LTBR/TNFRSF3. May play a specific role in immune response regulation. Provides the membrane anchor for the attachment of the heterotrimeric complex to the cell surface. In Pan troglodytes (Chimpanzee), this protein is Lymphotoxin-beta (LTB).